Reading from the N-terminus, the 307-residue chain is MSKHVAVLMGGWSSEREISLRSGNACAAALEGEGYRVTRVDVGPDIATVLTELRPDAALNALHGPAGEDGTIQGLLEILKIPYTHSGVLASALAMHKERAKTVMRAAGVSVPEGRVVNRHDAAKSHPLTPPYVVKPIAEGSSMGVIIVRDERSHPPQILASDEWVYGEEVLAETYVAGRELTCAVLGDRALGVTEIKPVSGEWYDFDAKYAGGGSIHVLPADLKLNIYQRVQELALTAHQALGCRGVSRADLRYDDTPGGTGALVVLEVNTQPGMTQTSLVPEIAAHAGQSFGELVRWMVEDASLNR.

The region spanning 101–301 (KTVMRAAGVS…FGELVRWMVE (201 aa)) is the ATP-grasp domain. 127-182 (PLTPPYVVKPIAEGSSMGVIIVRDERSHPPQILASDEWVYGEEVLAETYVAGRELT) is an ATP binding site. Residues D251, E268, and N270 each coordinate Mg(2+).

It belongs to the D-alanine--D-alanine ligase family. Requires Mg(2+) as cofactor. It depends on Mn(2+) as a cofactor.

The protein resides in the cytoplasm. It catalyses the reaction 2 D-alanine + ATP = D-alanyl-D-alanine + ADP + phosphate + H(+). It participates in cell wall biogenesis; peptidoglycan biosynthesis. In terms of biological role, cell wall formation. The polypeptide is D-alanine--D-alanine ligase (Methylorubrum extorquens (strain CM4 / NCIMB 13688) (Methylobacterium extorquens)).